The sequence spans 367 residues: UDP-N-acetylglucosamine--N-acetylmuramyl-(pentapeptide) pyrophosphoryl-undecaprenol N-acetylglucosamine transferase (367 aa).

UDP-N-acetyl-alpha-D-glucosamine contacts are provided by residues 15 to 17 (TGG), asparagine 127, arginine 163, serine 191, isoleucine 249, and glutamine 294.

The protein belongs to the glycosyltransferase 28 family. MurG subfamily.

The protein localises to the cell inner membrane. It catalyses the reaction di-trans,octa-cis-undecaprenyl diphospho-N-acetyl-alpha-D-muramoyl-L-alanyl-D-glutamyl-meso-2,6-diaminopimeloyl-D-alanyl-D-alanine + UDP-N-acetyl-alpha-D-glucosamine = di-trans,octa-cis-undecaprenyl diphospho-[N-acetyl-alpha-D-glucosaminyl-(1-&gt;4)]-N-acetyl-alpha-D-muramoyl-L-alanyl-D-glutamyl-meso-2,6-diaminopimeloyl-D-alanyl-D-alanine + UDP + H(+). It participates in cell wall biogenesis; peptidoglycan biosynthesis. Its function is as follows. Cell wall formation. Catalyzes the transfer of a GlcNAc subunit on undecaprenyl-pyrophosphoryl-MurNAc-pentapeptide (lipid intermediate I) to form undecaprenyl-pyrophosphoryl-MurNAc-(pentapeptide)GlcNAc (lipid intermediate II). In Burkholderia pseudomallei (strain 1710b), this protein is UDP-N-acetylglucosamine--N-acetylmuramyl-(pentapeptide) pyrophosphoryl-undecaprenol N-acetylglucosamine transferase.